The sequence spans 356 residues: CMP-sialic acid transporter 2 (356 aa).

Over residues 1–24 (MEYRRVKDQESYDVVSQKDIESPG) the composition is skewed to basic and acidic residues. Positions 1 to 44 (MEYRRVKDQESYDVVSQKDIESPGERSLSSTSATSSLSTAGASK) are disordered. Topologically, residues 1 to 52 (MEYRRVKDQESYDVVSQKDIESPGERSLSSTSATSSLSTAGASKGKNSWKLK) are cytoplasmic. Low complexity predominate over residues 27 to 44 (SLSSTSATSSLSTAGASK). A helical transmembrane segment spans residues 53–73 (SIVTLALTLLTSSQAILIVWS). Residues 74 to 82 (KRAGKYEYS) are Lumenal-facing. A helical transmembrane segment spans residues 83–103 (VTTANFSVEALKCLLSLIALY). Over 104–125 (RTWNSQGVTEDNRLSTSFDEVS) the chain is Cytoplasmic. A helical transmembrane segment spans residues 126–146 (VYPIPAILYMVKNLLQYYIFA). At 147-149 (YVD) the chain is on the lumenal side. A helical membrane pass occupies residues 150-172 (APAYQILKNLNIISTGVLYRIIL). The Cytoplasmic segment spans residues 173–175 (KKK). Residues 176–196 (LSEIQWAAFILLCAGCTTAQL) form a helical membrane-spanning segment. Residues 197–211 (NPSSDHVLQTPIQGW) lie on the Lumenal side of the membrane. A helical membrane pass occupies residues 212-232 (VMAIVMALLSGFAGVYTEAII). Residues 233–239 (KKRPSRN) are Cytoplasmic-facing. The helical transmembrane segment at 240–260 (INVQNFWLYIFGMLFNLVAIC) threads the bilayer. At 261–277 (VQDFDAVMNKGFFHGYS) the chain is on the lumenal side. The helical transmembrane segment at 278 to 298 (FITVLMILNHALSGIAVSMVM) threads the bilayer. Over 299-314 (KYADNIVKVYSTSVAM) the chain is Cytoplasmic. The chain crosses the membrane as a helical span at residues 315-335 (LLTAVVSVFLFGFHLSLAFFL). Residues 336–356 (GSTVVSVSVYLHSVGKPQPQK) are Lumenal-facing.

It belongs to the nucleotide-sugar transporter family. CMP-Sialate:CMP antiporter (TC 2.A.7.12) subfamily. Expressed in roots, leaves and stalks.

Its subcellular location is the golgi apparatus membrane. Its function is as follows. Sugar transporter involved in the transport of CMP-sialic acid from the cytoplasm into the Golgi. May transport important nucleotide sugars such as CMP-Kdo (2-keto-3-deoxy-D-manno-octulosonic acid) in physiological conditions. The protein is CMP-sialic acid transporter 2 of Oryza sativa subsp. japonica (Rice).